We begin with the raw amino-acid sequence, 378 residues long: Erythronate-4-phosphate dehydrogenase (378 aa).

Residues serine 45 and threonine 66 each contribute to the substrate site. The NAD(+) site is built by aspartate 146 and threonine 175. Arginine 208 is a catalytic residue. Aspartate 232 serves as a coordination point for NAD(+). Glutamate 237 is an active-site residue. Residue histidine 254 is the Proton donor of the active site. Residue glycine 257 coordinates NAD(+). A substrate-binding site is contributed by tyrosine 258.

Belongs to the D-isomer specific 2-hydroxyacid dehydrogenase family. PdxB subfamily. In terms of assembly, homodimer.

It is found in the cytoplasm. It catalyses the reaction 4-phospho-D-erythronate + NAD(+) = (R)-3-hydroxy-2-oxo-4-phosphooxybutanoate + NADH + H(+). The protein operates within cofactor biosynthesis; pyridoxine 5'-phosphate biosynthesis; pyridoxine 5'-phosphate from D-erythrose 4-phosphate: step 2/5. In terms of biological role, catalyzes the oxidation of erythronate-4-phosphate to 3-hydroxy-2-oxo-4-phosphonooxybutanoate. The chain is Erythronate-4-phosphate dehydrogenase from Shigella boydii serotype 4 (strain Sb227).